Reading from the N-terminus, the 464-residue chain is Growth hormone-releasing hormone receptor (464 aa).

Residues 1-22 form the signal peptide; the sequence is MDSLLWATWVLCLLNLWGVALG. Topologically, residues 23 to 130 are extracellular; that stretch reads HLHLECDFIT…EEKSYFSTVK (108 aa). Disulfide bonds link Cys-41–Cys-64, Cys-55–Cys-96, and Cys-78–Cys-112. N-linked (GlcNAc...) asparagine glycosylation is present at Asn-50. A helical membrane pass occupies residues 131–151; sequence IIYTTGHSISIVALCVAIAIL. Residues 152–167 lie on the Cytoplasmic side of the membrane; that stretch reads VALRRLHCPRNYIHTQ. The chain crosses the membrane as a helical span at residues 168–188; that stretch reads LFATFILKASAVFLKDAAVFQ. Topologically, residues 189 to 210 are extracellular; that stretch reads GDSTDHCSMSTILCKVSVAVSH. The helical transmembrane segment at 211–231 threads the bilayer; the sequence is FATMTNFSWLLAEAVYLSCLL. At 232–240 the chain is on the cytoplasmic side; sequence ASTSPRSKP. Residues 241–261 form a helical membrane-spanning segment; the sequence is AFWWLVLAGWGLPVLCTGTWV. Residues 262 to 283 are Extracellular-facing; that stretch reads GCKLAFEDTACWDLDDSSPYWW. The chain crosses the membrane as a helical span at residues 284–304; that stretch reads IIKGPIVLSVGVNFGLFLNII. The Cytoplasmic portion of the chain corresponds to 305–372; it reads CILLRKLGPA…QLPWRLSKST (68 aa). A helical transmembrane segment spans residues 373-393; sequence LLLIPLFGIHYIIFNFLPDSA. Residues 394-398 are Extracellular-facing; sequence GLGIR. The helical transmembrane segment at 399-419 threads the bilayer; sequence LPLELGLGSFQGFVVAVLYCF. Residues 420-464 are Cytoplasmic-facing; the sequence is LNQEVRTEISRKWYGHDPELLPARRTCTEWTTPPRSRVKVLTSEC.

Belongs to the G-protein coupled receptor 2 family. As to expression, pituitary gland.

The protein resides in the cell membrane. Its function is as follows. Receptor for GRF, coupled to G proteins which activate adenylyl cyclase. Stimulates somatotroph cell growth, growth hormone gene transcription and growth hormone secretion. The sequence is that of Growth hormone-releasing hormone receptor (Ghrhr) from Rattus norvegicus (Rat).